The chain runs to 258 residues: Deoxyribose-phosphate aldolase (258 aa).

Residue Asp-102 is the Proton donor/acceptor of the active site. Residue Lys-165 is the Schiff-base intermediate with acetaldehyde of the active site. Lys-199 (proton donor/acceptor) is an active-site residue.

Belongs to the DeoC/FbaB aldolase family. DeoC type 2 subfamily.

It localises to the cytoplasm. It catalyses the reaction 2-deoxy-D-ribose 5-phosphate = D-glyceraldehyde 3-phosphate + acetaldehyde. It functions in the pathway carbohydrate degradation; 2-deoxy-D-ribose 1-phosphate degradation; D-glyceraldehyde 3-phosphate and acetaldehyde from 2-deoxy-alpha-D-ribose 1-phosphate: step 2/2. Catalyzes a reversible aldol reaction between acetaldehyde and D-glyceraldehyde 3-phosphate to generate 2-deoxy-D-ribose 5-phosphate. The polypeptide is Deoxyribose-phosphate aldolase (Vibrio parahaemolyticus serotype O3:K6 (strain RIMD 2210633)).